The primary structure comprises 65 residues: Toxin NaTx-22 (65 aa).

The 64-residue stretch at 1–64 (KDGYPVIKTT…TYPIPGKTCK (64 aa)) folds into the LCN-type CS-alpha/beta domain. Disulfide bonds link C12–C63, C16–C39, C25–C44, and C29–C46.

Belongs to the long (4 C-C) scorpion toxin superfamily. Sodium channel inhibitor family. Expressed by the venom gland.

The protein localises to the secreted. Functionally, probable sodium channel inhibitor. The polypeptide is Toxin NaTx-22 (Centruroides sculpturatus (Arizona bark scorpion)).